The chain runs to 390 residues: MNKTNPTIALVAGEVSGDILGAGLIRQLKAHYPNARFIGIAGTRMLAEGCKTLVDMEELSVMGLAEILKHLPRLLKIRKNVIQTMLQEKPDVYIGIDAPDFNLDVELKLKANGIKTIHYVSPSVWAWRQNRIHKIAKATHQVLAFLPFEKAFYDKFNVPCRFIGHTMADAIPLKPNRAEACQMLQIDPAQRYLAILVGSRGSEVEFLAEPFLKTALLLKEQFPDLQFLVPLVNEKRRIQFEAIKAKIAPNLDLHLIDGNARQAMIAADATLLASGTAALEAMLCKSPMVVGYRMKPLTYFLAKRLVKTDYISLPNLLANEMLVPEMIQEECTPELLAEKLSAYLSDDESAVKNRHILIQHFTDLHQKIQCNADKQAAQAVIDLLEGTENV.

The protein belongs to the LpxB family.

The enzyme catalyses a lipid X + a UDP-2-N,3-O-bis[(3R)-3-hydroxyacyl]-alpha-D-glucosamine = a lipid A disaccharide + UDP + H(+). The protein operates within bacterial outer membrane biogenesis; LPS lipid A biosynthesis. Functionally, condensation of UDP-2,3-diacylglucosamine and 2,3-diacylglucosamine-1-phosphate to form lipid A disaccharide, a precursor of lipid A, a phosphorylated glycolipid that anchors the lipopolysaccharide to the outer membrane of the cell. The sequence is that of Lipid-A-disaccharide synthase from Haemophilus influenzae (strain 86-028NP).